We begin with the raw amino-acid sequence, 299 residues long: Quinolinate synthase (299 aa).

2 residues coordinate iminosuccinate: His21 and Ser38. Cys83 contributes to the [4Fe-4S] cluster binding site. Residues 109–111 and Ser126 contribute to the iminosuccinate site; that span reads YVN. Cys170 contacts [4Fe-4S] cluster. Residues 196 to 198 and Thr213 each bind iminosuccinate; that span reads HPE. Cys256 lines the [4Fe-4S] cluster pocket.

The protein belongs to the quinolinate synthase family. Type 2 subfamily. [4Fe-4S] cluster is required as a cofactor.

The protein resides in the cytoplasm. The catalysed reaction is iminosuccinate + dihydroxyacetone phosphate = quinolinate + phosphate + 2 H2O + H(+). The protein operates within cofactor biosynthesis; NAD(+) biosynthesis; quinolinate from iminoaspartate: step 1/1. Catalyzes the condensation of iminoaspartate with dihydroxyacetone phosphate to form quinolinate. This is Quinolinate synthase from Pyrococcus abyssi (strain GE5 / Orsay).